Reading from the N-terminus, the 507-residue chain is Keratin, type II cuticular Hb5 (507 aa).

Positions 1 to 123 are head; the sequence is MSCRSYRISS…PNAQCVKQEE (123 aa). The IF rod domain occupies 123 to 434; the sequence is EKEQIKSLNS…RLLEGEEHRL (312 aa). The coil 1A stretch occupies residues 124-158; it reads KEQIKSLNSRFAAFIDKVRFLEQQNKLLETKWQFY. The interval 159–168 is linker 1; it reads QNQRCCESNL. A coil 1B region spans residues 169 to 269; the sequence is EPLFSGYIET…YEEEIRVLQA (101 aa). A Glycyl lysine isopeptide (Lys-Gly) (interchain with G-Cter in SUMO1) cross-link involves residue lysine 229. The tract at residues 270–286 is linker 12; the sequence is HISDTSVIVKMDNSRDL. The coil 2 stretch occupies residues 287-430; sequence NMDCIIAEIK…ATYRRLLEGE (144 aa). Residues 431 to 507 form a tail region; the sequence is EHRLCEGVGS…CGSSRSVRFA (77 aa).

Belongs to the intermediate filament family. Heterotetramer of two type I and two type II keratins. In terms of tissue distribution, synthesis occurs immediately above a small population of matrix cells at the base of the hair bulb and the trichocytes lining the dermal papilla and extends upward through the matrix and ends in the lower part of the cortex of the hair shaft.

The sequence is that of Keratin, type II cuticular Hb5 (KRT85) from Homo sapiens (Human).